Here is a 119-residue protein sequence, read N- to C-terminus: Large ribosomal subunit protein bL20c (119 aa).

Belongs to the bacterial ribosomal protein bL20 family.

The protein resides in the plastid. It is found in the chloroplast. Binds directly to 23S ribosomal RNA and is necessary for the in vitro assembly process of the 50S ribosomal subunit. It is not involved in the protein synthesizing functions of that subunit. This Lolium perenne (Perennial ryegrass) protein is Large ribosomal subunit protein bL20c.